Here is a 69-residue protein sequence, read N- to C-terminus: UPF0150 protein AF_1072 (69 aa).

This sequence belongs to the UPF0150 family.

This Archaeoglobus fulgidus (strain ATCC 49558 / DSM 4304 / JCM 9628 / NBRC 100126 / VC-16) protein is UPF0150 protein AF_1072.